A 75-amino-acid polypeptide reads, in one-letter code: Bacteriocin lactococcin-A (75 aa).

The propeptide occupies 1-21; sequence MKNQLNFNIVSDEELSEANGG. A helical membrane pass occupies residues 30–52; that stretch reads AAGDLYYNTNTHKYVYQQTQNAF.

It localises to the secreted. It is found in the host cell membrane. In terms of biological role, kills Lactococci. In Lactococcus lactis subsp. cremoris (Streptococcus cremoris), this protein is Bacteriocin lactococcin-A (lcnA).